We begin with the raw amino-acid sequence, 103 residues long: UPF0145 protein CYA_2258 (103 aa).

Belongs to the UPF0145 family.

This chain is UPF0145 protein CYA_2258, found in Synechococcus sp. (strain JA-3-3Ab) (Cyanobacteria bacterium Yellowstone A-Prime).